We begin with the raw amino-acid sequence, 346 residues long: Holliday junction branch migration complex subunit RuvB (346 aa).

The large ATPase domain (RuvB-L) stretch occupies residues 1–183; sequence MTEQRIIASS…FGIVQRLEFY (183 aa). Residues Ile-22, Arg-23, Gly-64, Lys-67, Thr-68, Thr-69, 130-132, Arg-173, Tyr-183, and Arg-220 each bind ATP; that span reads EDF. Position 68 (Thr-68) interacts with Mg(2+). Residues 184 to 254 form a small ATPAse domain (RuvB-S) region; it reads SPQELTRIVS…VAQAAMQMLK (71 aa). Positions 257–346 are head domain (RuvB-H); the sequence is PEGFDELDRR…PGIGEPGDLF (90 aa). Positions 293, 312, and 317 each coordinate DNA.

It belongs to the RuvB family. As to quaternary structure, homohexamer. Forms an RuvA(8)-RuvB(12)-Holliday junction (HJ) complex. HJ DNA is sandwiched between 2 RuvA tetramers; dsDNA enters through RuvA and exits via RuvB. An RuvB hexamer assembles on each DNA strand where it exits the tetramer. Each RuvB hexamer is contacted by two RuvA subunits (via domain III) on 2 adjacent RuvB subunits; this complex drives branch migration. In the full resolvosome a probable DNA-RuvA(4)-RuvB(12)-RuvC(2) complex forms which resolves the HJ.

It is found in the cytoplasm. It catalyses the reaction ATP + H2O = ADP + phosphate + H(+). Functionally, the RuvA-RuvB-RuvC complex processes Holliday junction (HJ) DNA during genetic recombination and DNA repair, while the RuvA-RuvB complex plays an important role in the rescue of blocked DNA replication forks via replication fork reversal (RFR). RuvA specifically binds to HJ cruciform DNA, conferring on it an open structure. The RuvB hexamer acts as an ATP-dependent pump, pulling dsDNA into and through the RuvAB complex. RuvB forms 2 homohexamers on either side of HJ DNA bound by 1 or 2 RuvA tetramers; 4 subunits per hexamer contact DNA at a time. Coordinated motions by a converter formed by DNA-disengaged RuvB subunits stimulates ATP hydrolysis and nucleotide exchange. Immobilization of the converter enables RuvB to convert the ATP-contained energy into a lever motion, pulling 2 nucleotides of DNA out of the RuvA tetramer per ATP hydrolyzed, thus driving DNA branch migration. The RuvB motors rotate together with the DNA substrate, which together with the progressing nucleotide cycle form the mechanistic basis for DNA recombination by continuous HJ branch migration. Branch migration allows RuvC to scan DNA until it finds its consensus sequence, where it cleaves and resolves cruciform DNA. The chain is Holliday junction branch migration complex subunit RuvB from Xanthomonas euvesicatoria pv. vesicatoria (strain 85-10) (Xanthomonas campestris pv. vesicatoria).